The following is a 198-amino-acid chain: NAD(P)H dehydrogenase (quinone) (198 aa).

The 186-residue stretch at 4 to 189 (ILVLYYSMYG…SIARYQGEYV (186 aa)) folds into the Flavodoxin-like domain. Residues 10–15 (SMYGHI) and 78–80 (TRF) each bind FMN. Tyr12 is an NAD(+) binding site. Trp98 lines the substrate pocket. Residues 113–118 (STGTGG) and His133 contribute to the FMN site.

This sequence belongs to the WrbA family. The cofactor is FMN.

The enzyme catalyses a quinone + NADH + H(+) = a quinol + NAD(+). It catalyses the reaction a quinone + NADPH + H(+) = a quinol + NADP(+). The chain is NAD(P)H dehydrogenase (quinone) from Citrobacter koseri (strain ATCC BAA-895 / CDC 4225-83 / SGSC4696).